A 437-amino-acid polypeptide reads, in one-letter code: MPVIHKIHARQILDSRGNPTVEVDVYTESSFGRAAVPSGASTGVHEAVELRDGDKGVYLGKGVLKAVENVNTVIDEALRGMLVTEQEEIDARLLELDGTPNKSKLGANALLGVSMACAKAGAEYSGLSLFRYIGGTMANTLPVPMMNVLNGGAHADNTVDFQEFMIMPIGFSTYSDALRCGAEIFHALKALLHSRGLSTAVGDEGGFAPNLRSNEEAIELVVEAIGKAGYKAGSPASKGGLGDAQVMIALDPASSEFYDTEKKKYVFKKSDKRELSSEEMASYWEGWANTYPIISIEDGMAEDDWAGWKLLTEKIGDRVQLVGDDLFVTNSLRLAEGIEKGVGNSILIKVNQIGTLTETLRAIDLAKRNGYTSVISHRSGETEDSTIAQIAVATNAGQIKTGSMSRSDRMSKYNELLRIEEELGEQAIYPGKQAFRV.

Gln-162 provides a ligand contact to (2R)-2-phosphoglycerate. Glu-204 acts as the Proton donor in catalysis. 3 residues coordinate Mg(2+): Asp-251, Glu-297, and Asp-324. Lys-349, Arg-378, Ser-379, and Lys-400 together coordinate (2R)-2-phosphoglycerate. Lys-349 serves as the catalytic Proton acceptor.

This sequence belongs to the enolase family. It depends on Mg(2+) as a cofactor.

The protein localises to the cytoplasm. It localises to the secreted. The protein resides in the cell surface. It carries out the reaction (2R)-2-phosphoglycerate = phosphoenolpyruvate + H2O. The protein operates within carbohydrate degradation; glycolysis; pyruvate from D-glyceraldehyde 3-phosphate: step 4/5. Its function is as follows. Catalyzes the reversible conversion of 2-phosphoglycerate (2-PG) into phosphoenolpyruvate (PEP). It is essential for the degradation of carbohydrates via glycolysis. The chain is Enolase from Chlorobium luteolum (strain DSM 273 / BCRC 81028 / 2530) (Pelodictyon luteolum).